Reading from the N-terminus, the 479-residue chain is Ribosomal RNA small subunit methyltransferase F (479 aa).

S-adenosyl-L-methionine-binding positions include 125-131 (AAAPGSK), glutamate 149, aspartate 176, and aspartate 194. The active-site Nucleophile is the cysteine 247.

This sequence belongs to the class I-like SAM-binding methyltransferase superfamily. RsmB/NOP family.

It localises to the cytoplasm. It catalyses the reaction cytidine(1407) in 16S rRNA + S-adenosyl-L-methionine = 5-methylcytidine(1407) in 16S rRNA + S-adenosyl-L-homocysteine + H(+). Functionally, specifically methylates the cytosine at position 1407 (m5C1407) of 16S rRNA. This is Ribosomal RNA small subunit methyltransferase F from Shigella dysenteriae serotype 1 (strain Sd197).